Reading from the N-terminus, the 95-residue chain is uncharacterized protein (95 aa).

Lys-21 is a binding site for phosphate. Position 44 (Asp-44) interacts with Mg(2+). Residue Asn-47 coordinates phosphate.

The protein belongs to the HAD-like hydrolase superfamily. Cof family. Requires Mg(2+) as cofactor.

This is an uncharacterized protein from Geobacillus stearothermophilus (Bacillus stearothermophilus).